Reading from the N-terminus, the 302-residue chain is FeMo cofactor biosynthesis protein NifB (302 aa).

One can recognise a Radical SAM core domain in the interval 22–264 (HDKYGRVHLP…PQFRACGQCR (243 aa)). Residues Cys-36, Cys-40, and Cys-43 each contribute to the [4Fe-4S] cluster site. S-adenosyl-L-methionine contacts are provided by Gly-91, Thr-142, and Ile-194. [4Fe-4S] cluster contacts are provided by Cys-260 and Cys-263.

Belongs to the radical SAM superfamily. NifB family. Monomer. The cofactor is [4Fe-4S] cluster.

The protein operates within cofactor biosynthesis; Fe-Mo cofactor biosynthesis. Functionally, involved in the biosynthesis of the iron-molybdenum cofactor (FeMo-co or M-cluster) found in the dinitrogenase enzyme of the nitrogenase complex in nitrogen-fixing microorganisms. NifB catalyzes the crucial step of radical SAM-dependent carbide insertion that occurs concomitant with the insertion of a 9th sulfur and the rearrangement/coupling of two [4Fe-4S] clusters into a [8Fe-9S-C] cluster, the precursor to the M-cluster. The sequence is that of FeMo cofactor biosynthesis protein NifB from Methanocaldococcus infernus (strain DSM 11812 / JCM 15783 / ME).